The chain runs to 209 residues: Ribosomal RNA small subunit methyltransferase G (209 aa).

S-adenosyl-L-methionine is bound by residues glycine 77, methionine 82, 128–129 (VE), and arginine 143.

This sequence belongs to the methyltransferase superfamily. RNA methyltransferase RsmG family.

The protein localises to the cytoplasm. It catalyses the reaction guanosine(527) in 16S rRNA + S-adenosyl-L-methionine = N(7)-methylguanosine(527) in 16S rRNA + S-adenosyl-L-homocysteine. Specifically methylates the N7 position of guanine in position 527 of 16S rRNA. The polypeptide is Ribosomal RNA small subunit methyltransferase G (Chromobacterium violaceum (strain ATCC 12472 / DSM 30191 / JCM 1249 / CCUG 213 / NBRC 12614 / NCIMB 9131 / NCTC 9757 / MK)).